A 270-amino-acid polypeptide reads, in one-letter code: S-adenosylmethionine decarboxylase proenzyme (270 aa).

S120 (schiff-base intermediate with substrate; via pyruvic acid) is an active-site residue. S120 bears the Pyruvic acid (Ser); by autocatalysis mark. H125 (proton acceptor; for processing activity) is an active-site residue. Catalysis depends on C148, which acts as the Proton donor; for catalytic activity.

It belongs to the prokaryotic AdoMetDC family. Type 2 subfamily. In terms of assembly, heterooctamer of four alpha and four beta chains arranged as a tetramer of alpha/beta heterodimers. Requires pyruvate as cofactor. Post-translationally, is synthesized initially as an inactive proenzyme. Formation of the active enzyme involves a self-maturation process in which the active site pyruvoyl group is generated from an internal serine residue via an autocatalytic post-translational modification. Two non-identical subunits are generated from the proenzyme in this reaction, and the pyruvate is formed at the N-terminus of the alpha chain, which is derived from the carboxyl end of the proenzyme. The post-translation cleavage follows an unusual pathway, termed non-hydrolytic serinolysis, in which the side chain hydroxyl group of the serine supplies its oxygen atom to form the C-terminus of the beta chain, while the remainder of the serine residue undergoes an oxidative deamination to produce ammonia and the pyruvoyl group blocking the N-terminus of the alpha chain.

It carries out the reaction S-adenosyl-L-methionine + H(+) = S-adenosyl 3-(methylsulfanyl)propylamine + CO2. Its pathway is amine and polyamine biosynthesis; S-adenosylmethioninamine biosynthesis; S-adenosylmethioninamine from S-adenosyl-L-methionine: step 1/1. Functionally, catalyzes the decarboxylation of S-adenosylmethionine to S-adenosylmethioninamine (dcAdoMet), the propylamine donor required for the synthesis of the polyamines spermine and spermidine from the diamine putrescine. The chain is S-adenosylmethionine decarboxylase proenzyme from Alkaliphilus oremlandii (strain OhILAs) (Clostridium oremlandii (strain OhILAs)).